The primary structure comprises 489 residues: Interferon gamma receptor 1 (489 aa).

The N-terminal stretch at 1–17 (MALLFLLPLVMQGVSRA) is a signal peptide. Residues 18 to 245 (EMGTADLGPS…ITIFNSSIKG (228 aa)) lie on the Extracellular side of the membrane. N-linked (GlcNAc...) asparagine glycans are attached at residues N34, N79, and N86. A disulfide bridge links C77 with C85. C122 and C167 are disulfide-bonded. N179 carries an N-linked (GlcNAc...) asparagine glycan. 2 cysteine pairs are disulfide-bonded: C195–C200 and C214–C235. N240 is a glycosylation site (N-linked (GlcNAc...) asparagine). The helical transmembrane segment at 246–266 (SLWIPVVAALLLFLVLSLVFI) threads the bilayer. At 267-489 (CFYIKKINPL…RPTEDSKEFS (223 aa)) the chain is on the cytoplasmic side. The disordered stretch occupies residues 329–437 (ATVPGMHTED…SEFPPNNKGE (109 aa)). Residues 335–348 (HTEDNPGKVEHTEE) are compositionally biased toward basic and acidic residues. The span at 349–360 (LSSITEVVTTEE) shows a compositional bias: polar residues. The residue at position 369 (S369) is a Phosphoserine. T372 bears the Phosphothreonine mark. At S378 the chain carries Phosphoserine. A compositionally biased stretch (low complexity) spans 379 to 391 (SSPLSSNQSEPGS). Over residues 401–412 (NCSESDHSRNGF) the composition is skewed to basic and acidic residues. S403 bears the Phosphoserine mark. The span at 415 to 429 (DSSCLESHSSLSDSE) shows a compositional bias: low complexity. The residue at position 457 (Y457) is a Phosphotyrosine.

Belongs to the type II cytokine receptor family. In terms of assembly, monomer. Heterodimer with IFNGR2, to form the IFNG receptor complex. Interacts with JAK1. Interacts (when phosphorylated) with STAT1. Interacts with SOCS1. In terms of processing, phosphorylated at Ser/Thr residues. Phosphorylation of Tyr-457 is required for IFNG receptor signal transduction. Influenza virus infection leads to phosphorylation in a CSNK1A1-dependent manner. Post-translationally, ubiquitinated after phosphorylation in a CSNK1A1-dependent manner, leading to the lysosome-dependent degradation. Proteasomally degraded through 'Lys-48'-mediated ubiquitination. Ubiquitination is necessary for efficient IFNGR1 signaling.

The protein resides in the cell membrane. Functionally, receptor subunit for interferon gamma/INFG that plays crucial roles in antimicrobial, antiviral, and antitumor responses by activating effector immune cells and enhancing antigen presentation. Associates with transmembrane accessory factor IFNGR2 to form a functional receptor. Upon ligand binding, the intracellular domain of IFNGR1 opens out to allow association of downstream signaling components JAK1 and JAK2. In turn, activated JAK1 phosphorylates IFNGR1 to form a docking site for STAT1. Subsequent phosphorylation of STAT1 leads to dimerization, translocation to the nucleus, and stimulation of target gene transcription. STAT3 can also be activated in a similar manner although activation seems weaker. IFNGR1 intracellular domain phosphorylation also provides a docking site for SOCS1 that regulates the JAK-STAT pathway by competing with STAT1 binding to IFNGR1. This chain is Interferon gamma receptor 1, found in Homo sapiens (Human).